We begin with the raw amino-acid sequence, 950 residues long: Protocadherin alpha-1 (950 aa).

Positions 1–29 are cleaved as a signal peptide; the sequence is MVFSRRGGLGARDLLLWLLLLAAWEVGSG. Cadherin domains are found at residues 30-133, 157-242, 243-350, 351-455, 456-565, and 588-678; these read QLHY…PPVF, AADA…APLF, DQAV…APEL, AVTS…APAF, AQPE…APAL, and GHVV…APKA. At 30–697 the chain is on the extracellular side; it reads QLHYSIPEEA…GPEAALVDVN (668 aa). N-linked (GlcNAc...) asparagine glycans are attached at residues Asn-257 and Asn-265. N-linked (GlcNAc...) asparagine glycosylation occurs at Asn-548. The chain crosses the membrane as a helical span at residues 698–718; that stretch reads VYLIIAICAVSSLLVLTLLLY. The Cytoplasmic portion of the chain corresponds to 719–950; that stretch reads TALRCSVPPT…GNSTTDNSDQ (232 aa). PXXP repeat units follow at residues 734–737, 799–802, 832–835, 873–876, and 891–894; these read PGKP, PRQP, PGGP, PGNP, and PGSP. Residues 734 to 894 are 5 X 4 AA repeats of P-X-X-P; the sequence is PGKPTLVCSS…PDKFIIPGSP (161 aa). 3 disordered regions span residues 752 to 808, 828 to 856, and 871 to 890; these read QQRR…DWRY, LRAG…EVSP, and YGPG…KFII. Residues 900 to 950 form a disordered region; it reads RQEPTNSQIDKSDFITFGKKEETKKKKKKKKGNKTQEKKEKGNSTTDNSDQ. Basic and acidic residues predominate over residues 909–923; sequence DKSDFITFGKKEETK.

It localises to the cell membrane. The protein localises to the secreted. Its function is as follows. Potential calcium-dependent cell-adhesion protein. May be involved in the establishment and maintenance of specific neuronal connections in the brain. The polypeptide is Protocadherin alpha-1 (PCDHA1) (Homo sapiens (Human)).